The primary structure comprises 489 residues: FAD-containing monooxygenase EthA (489 aa).

FAD-binding positions include S15, E36, 44–47 (TWDL), D56, and V104. Position 54–56 (54–56 (RSD)) interacts with NADP(+). Residues 183–189 (SGATAVT) and 207–208 (RS) contribute to the NADP(+) site.

The protein belongs to the FAD-binding monooxygenase family. FAD is required as a cofactor.

The protein localises to the cell membrane. The enzyme catalyses ethionamide + NADPH + O2 + H(+) = ethionamide S-oxide + NADP(+) + H2O. Its function is as follows. Monooxygenase able to convert a wide range of ketones to the corresponding esters or lactones via a Baeyer-Villiger oxidation reaction. Can act on long-chain aliphatic ketones (2-hexanone to 2-dodecanone) and on aromatic ketones (phenylacetone and benzylacetone). Is also able to catalyze enantioselective sulfoxidation of methyl-p-tolylsulfide. In vivo, likely functions as a BVMO, but the exact nature of the physiological substrate(s) remains to be established. In terms of biological role, is responsible for the activation of several thiocarbamide-containing pro-drugs, such as ethionamide (ETH), isoxyl (ISO) and thiacetazone (TAC), into reactive species. This chain is FAD-containing monooxygenase EthA (ethA), found in Mycobacterium bovis (strain ATCC BAA-935 / AF2122/97).